Consider the following 130-residue polypeptide: Small ribosomal subunit protein uS9 (130 aa).

Belongs to the universal ribosomal protein uS9 family.

The protein is Small ribosomal subunit protein uS9 of Leptothrix cholodnii (strain ATCC 51168 / LMG 8142 / SP-6) (Leptothrix discophora (strain SP-6)).